A 79-amino-acid chain; its full sequence is ATP synthase subunit c (79 aa).

The next 2 helical transmembrane spans lie at I11–L31 and F53–Y73.

This sequence belongs to the ATPase C chain family. As to quaternary structure, F-type ATPases have 2 components, F(1) - the catalytic core - and F(0) - the membrane proton channel. F(1) has five subunits: alpha(3), beta(3), gamma(1), delta(1), epsilon(1). F(0) has three main subunits: a(1), b(2) and c(10-14). The alpha and beta chains form an alternating ring which encloses part of the gamma chain. F(1) is attached to F(0) by a central stalk formed by the gamma and epsilon chains, while a peripheral stalk is formed by the delta and b chains.

The protein resides in the cell membrane. Functionally, f(1)F(0) ATP synthase produces ATP from ADP in the presence of a proton or sodium gradient. F-type ATPases consist of two structural domains, F(1) containing the extramembraneous catalytic core and F(0) containing the membrane proton channel, linked together by a central stalk and a peripheral stalk. During catalysis, ATP synthesis in the catalytic domain of F(1) is coupled via a rotary mechanism of the central stalk subunits to proton translocation. Key component of the F(0) channel; it plays a direct role in translocation across the membrane. A homomeric c-ring of between 10-14 subunits forms the central stalk rotor element with the F(1) delta and epsilon subunits. This Buchnera aphidicola subsp. Acyrthosiphon pisum (strain 5A) protein is ATP synthase subunit c.